The primary structure comprises 373 residues: RNA 3'-terminal phosphate cyclase-like protein (373 aa).

This sequence belongs to the RNA 3'-terminal cyclase family. Type 2 subfamily. In terms of assembly, part of the small subunit (SSU) processome, composed of more than 70 proteins and the RNA chaperone small nucleolar RNA (snoRNA) U3. Interacts with BMS1.

The protein localises to the nucleus. It localises to the nucleolus. In terms of biological role, as part of the small subunit (SSU) processome, it plays a role in 40S-ribosomal-subunit biogenesis in the early pre-rRNA processing steps at sites A0, A1 and A2 that are required for proper maturation of the 18S RNA. Activates BMS1 by promoting GDP/GTP exchange. Does not have cyclase activity. The polypeptide is RNA 3'-terminal phosphate cyclase-like protein (RCL1) (Bos taurus (Bovine)).